Here is a 631-residue protein sequence, read N- to C-terminus: Glutamyl-tRNA(Gln) amidotransferase subunit E (631 aa).

This sequence belongs to the GatB/GatE family. GatE subfamily. Heterodimer of GatD and GatE.

It catalyses the reaction L-glutamyl-tRNA(Gln) + L-glutamine + ATP + H2O = L-glutaminyl-tRNA(Gln) + L-glutamate + ADP + phosphate + H(+). Functionally, allows the formation of correctly charged Gln-tRNA(Gln) through the transamidation of misacylated Glu-tRNA(Gln) in organisms which lack glutaminyl-tRNA synthetase. The reaction takes place in the presence of glutamine and ATP through an activated gamma-phospho-Glu-tRNA(Gln). The GatDE system is specific for glutamate and does not act on aspartate. This is Glutamyl-tRNA(Gln) amidotransferase subunit E from Methanococcus maripaludis (strain C7 / ATCC BAA-1331).